Reading from the N-terminus, the 225-residue chain is Protein-L-isoaspartate O-methyltransferase (225 aa).

Ser-75 is an active-site residue.

It belongs to the methyltransferase superfamily. L-isoaspartyl/D-aspartyl protein methyltransferase family.

It localises to the cytoplasm. The enzyme catalyses [protein]-L-isoaspartate + S-adenosyl-L-methionine = [protein]-L-isoaspartate alpha-methyl ester + S-adenosyl-L-homocysteine. In terms of biological role, catalyzes the methyl esterification of L-isoaspartyl residues in peptides and proteins that result from spontaneous decomposition of normal L-aspartyl and L-asparaginyl residues. It plays a role in the repair and/or degradation of damaged proteins. The sequence is that of Protein-L-isoaspartate O-methyltransferase from Xylella fastidiosa (strain 9a5c).